A 401-amino-acid polypeptide reads, in one-letter code: 8-amino-7-oxononanoate synthase (401 aa).

Arg19 contributes to the substrate binding site. Pyridoxal 5'-phosphate is bound at residue 106-107 (GY). His131 is a binding site for substrate. 3 residues coordinate pyridoxal 5'-phosphate: Ser176, His204, and Thr233. At Lys236 the chain carries N6-(pyridoxal phosphate)lysine. Thr350 contacts substrate.

It belongs to the class-II pyridoxal-phosphate-dependent aminotransferase family. BioF subfamily. Homodimer. The cofactor is pyridoxal 5'-phosphate.

The catalysed reaction is 6-carboxyhexanoyl-[ACP] + L-alanine + H(+) = (8S)-8-amino-7-oxononanoate + holo-[ACP] + CO2. The protein operates within cofactor biosynthesis; biotin biosynthesis. Its function is as follows. Catalyzes the decarboxylative condensation of pimeloyl-[acyl-carrier protein] and L-alanine to produce 8-amino-7-oxononanoate (AON), [acyl-carrier protein], and carbon dioxide. This Pseudomonas aeruginosa (strain LESB58) protein is 8-amino-7-oxononanoate synthase.